A 285-amino-acid polypeptide reads, in one-letter code: GPN-loop GTPase 3 (285 aa).

13-18 provides a ligand contact to GTP; it reads GSGKST. The short motif at 72–74 is the Gly-Pro-Asn (GPN)-loop; involved in dimer interface element; it reads GPN. GTP is bound at residue 174–177; that stretch reads TKMD. The interval 262–285 is disordered; that stretch reads EPKEVDEEPSNSNFDAFFQDTADS.

The protein belongs to the GPN-loop GTPase family. In terms of assembly, heterodimer with gpn1. Binds to RNA polymerase II (RNAPII).

Small GTPase required for proper localization of RNA polymerase II (RNAPII). May act at an RNAP assembly step prior to nuclear import. The protein is GPN-loop GTPase 3 of Danio rerio (Zebrafish).